A 122-amino-acid polypeptide reads, in one-letter code: Large ribosomal subunit protein uL14 (122 aa).

Belongs to the universal ribosomal protein uL14 family. Part of the 50S ribosomal subunit. Forms a cluster with proteins L3 and L19. In the 70S ribosome, L14 and L19 interact and together make contacts with the 16S rRNA in bridges B5 and B8.

In terms of biological role, binds to 23S rRNA. Forms part of two intersubunit bridges in the 70S ribosome. The sequence is that of Large ribosomal subunit protein uL14 from Buchnera aphidicola subsp. Schizaphis graminum (strain Sg).